We begin with the raw amino-acid sequence, 193 residues long: MSRKCLVITVSGLAGSGTTTLCRNLSRYYGFKHIYAGLIFRQMAKEMGMSLQQFQEYAEMHPEIDREVDRRQIEAAEDCNVVIEGRLAGWMVKEADLKVWLEAPIQVRAQRVARREGISIEEAFMQIAEREMQNRKRYLNLYGIDINDRSIYDLVINTFKWGPDGVFAIVKAAIDHLYPDGDAGSGANPGNKS.

12–20 (GLAGSGTTT) is a binding site for ATP.

The protein belongs to the cytidylate kinase family. Type 2 subfamily.

The protein localises to the cytoplasm. The enzyme catalyses CMP + ATP = CDP + ADP. It carries out the reaction dCMP + ATP = dCDP + ADP. The polypeptide is Cytidylate kinase (Thermococcus sibiricus (strain DSM 12597 / MM 739)).